The primary structure comprises 132 residues: Small ribosomal subunit protein uS11 (132 aa).

This sequence belongs to the universal ribosomal protein uS11 family. In terms of assembly, part of the 30S ribosomal subunit.

In terms of biological role, located on the platform of the 30S subunit. The polypeptide is Small ribosomal subunit protein uS11 (Saccharolobus solfataricus (strain ATCC 35092 / DSM 1617 / JCM 11322 / P2) (Sulfolobus solfataricus)).